The primary structure comprises 682 residues: T-box brain protein 1 (682 aa).

Disordered regions lie at residues 43 to 83 and 108 to 127; these read TDNL…RSKL and SQSS…FPYP. Polar residues predominate over residues 58–68; sequence GMTNQSDTDNF. Residues 108–122 show a composition bias toward low complexity; the sequence is SQSSQPQSAATAPSA. The T-box DNA-binding region spans 213–393; it reads LWLKFHRHQT…HNPFAKGFRD (181 aa). A Phosphothreonine modification is found at T408. At S410 the chain carries Phosphoserine. Disordered regions lie at residues 447 to 483 and 588 to 658; these read PGAG…SPQR and GLAA…KSEV. A compositionally biased stretch (polar residues) spans 462–472; sequence PHTNGLLSPQQ. S594 is subject to Phosphoserine. The segment covering 619–629 has biased composition (low complexity); the sequence is SSIKSIDSSDS. A Phosphoserine modification is found at S641.

Homodimer. Part of a complex containing CASK, TBR1 and TSPYL2; may modulate gene expression in response to neuronal synaptic activity. Interacts with FOXP2. Interacts with FOXP1. Interacts with BCL11A. In terms of tissue distribution, brain.

The protein resides in the nucleus. Its function is as follows. Transcriptional repressor involved in multiple aspects of cortical development, including neuronal migration, laminar and areal identity, and axonal projection. As transcriptional repressor of FEZF2, it blocks the formation of the corticospinal (CS) tract from layer 6 projection neurons, thereby restricting the origin of CS axons specifically to layer 5 neurons. The protein is T-box brain protein 1 (TBR1) of Homo sapiens (Human).